Reading from the N-terminus, the 176-residue chain is Prion-like protein doppel (176 aa).

Residues 1 to 25 form the signal peptide; the sequence is MRKHLSWWWLATVCMLLFSHLSAVQ. Residues 27-50 form a flexible tail region; the sequence is RGIKHRIKWNRKALPSTAQITEAQ. O-linked (GalNAc...) threonine glycosylation occurs at threonine 43. Positions 51 to 152 are globular; it reads VAENRPGAFI…KHCEFWLERG (102 aa). 2 disulfides stabilise this stretch: cysteine 94-cysteine 145 and cysteine 108-cysteine 140. Asparagine 98 and asparagine 110 each carry an N-linked (GlcNAc...) asparagine glycan. Residues 122-139 are cu(2+) binding; sequence KPDNKLHQQVLWRLVQEL. Residue glycine 152 is the site of GPI-anchor amidated glycine attachment. Positions 153 to 176 are cleaved as a propeptide — removed in mature form; it reads AGLRVTMHQPVLLCLLALIWLTVK.

This sequence belongs to the prion family. In terms of processing, N-glycosylated. N-glycosylated at two distinct sites. Post-translationally, O-glycosylated. In terms of tissue distribution, expressed in testis, in Sertoli cells, ejaculated spermatozoa and in seminal fluid (at protein level).

Its subcellular location is the cell membrane. Functionally, required for normal acrosome reaction and for normal male fertility. Can bind Cu(2+). The sequence is that of Prion-like protein doppel (PRND) from Homo sapiens (Human).